The primary structure comprises 774 residues: Protein translocase subunit SecA (774 aa).

ATP-binding positions include Gln-66, 84-88 (GEGKS), and Asp-474.

The protein belongs to the SecA family.

It localises to the plastid. Its subcellular location is the chloroplast stroma. It is found in the chloroplast thylakoid membrane. The enzyme catalyses ATP + H2O + cellular proteinSide 1 = ADP + phosphate + cellular proteinSide 2.. Its function is as follows. Has a central role in coupling the hydrolysis of ATP to the transfer of proteins across the thylakoid membrane. The polypeptide is Protein translocase subunit SecA (Cyanidioschyzon merolae (strain NIES-3377 / 10D) (Unicellular red alga)).